Reading from the N-terminus, the 290-residue chain is Phosphatidylserine decarboxylase proenzyme (290 aa).

Active-site charge relay system; for autoendoproteolytic cleavage activity residues include D96, H153, and S257. The active-site Schiff-base intermediate with substrate; via pyruvic acid; for decarboxylase activity is the S257. The residue at position 257 (S257) is a Pyruvic acid (Ser); by autocatalysis.

It belongs to the phosphatidylserine decarboxylase family. PSD-B subfamily. Prokaryotic type I sub-subfamily. In terms of assembly, heterodimer of a large membrane-associated beta subunit and a small pyruvoyl-containing alpha subunit. It depends on pyruvate as a cofactor. In terms of processing, is synthesized initially as an inactive proenzyme. Formation of the active enzyme involves a self-maturation process in which the active site pyruvoyl group is generated from an internal serine residue via an autocatalytic post-translational modification. Two non-identical subunits are generated from the proenzyme in this reaction, and the pyruvate is formed at the N-terminus of the alpha chain, which is derived from the carboxyl end of the proenzyme. The autoendoproteolytic cleavage occurs by a canonical serine protease mechanism, in which the side chain hydroxyl group of the serine supplies its oxygen atom to form the C-terminus of the beta chain, while the remainder of the serine residue undergoes an oxidative deamination to produce ammonia and the pyruvoyl prosthetic group on the alpha chain. During this reaction, the Ser that is part of the protease active site of the proenzyme becomes the pyruvoyl prosthetic group, which constitutes an essential element of the active site of the mature decarboxylase.

The protein resides in the cell membrane. It carries out the reaction a 1,2-diacyl-sn-glycero-3-phospho-L-serine + H(+) = a 1,2-diacyl-sn-glycero-3-phosphoethanolamine + CO2. It functions in the pathway phospholipid metabolism; phosphatidylethanolamine biosynthesis; phosphatidylethanolamine from CDP-diacylglycerol: step 2/2. Its function is as follows. Catalyzes the formation of phosphatidylethanolamine (PtdEtn) from phosphatidylserine (PtdSer). The polypeptide is Phosphatidylserine decarboxylase proenzyme (Haemophilus influenzae (strain ATCC 51907 / DSM 11121 / KW20 / Rd)).